A 290-amino-acid chain; its full sequence is Pyridoxal kinase PdxY (290 aa).

Residues Ser12 and 47–48 (TQ) each bind substrate. Residues Asp114, Glu151, Lys184, and 211–214 (RPLL) contribute to the ATP site. Asp225 lines the substrate pocket.

This sequence belongs to the pyridoxine kinase family. PdxY subfamily. Homodimer. The cofactor is Mg(2+).

The catalysed reaction is pyridoxal + ATP = pyridoxal 5'-phosphate + ADP + H(+). The protein operates within cofactor metabolism; pyridoxal 5'-phosphate salvage; pyridoxal 5'-phosphate from pyridoxal: step 1/1. Pyridoxal kinase involved in the salvage pathway of pyridoxal 5'-phosphate (PLP). Catalyzes the phosphorylation of pyridoxal to PLP. This chain is Pyridoxal kinase PdxY, found in Pseudomonas entomophila (strain L48).